The chain runs to 109 residues: Meiotically up-regulated gene 153 protein (109 aa).

Its subcellular location is the mitochondrion. Functionally, has a role in meiosis. The protein is Meiotically up-regulated gene 153 protein (mug153) of Schizosaccharomyces pombe (strain 972 / ATCC 24843) (Fission yeast).